The following is a 55-amino-acid chain: Large ribosomal subunit protein bL33 (55 aa).

Belongs to the bacterial ribosomal protein bL33 family.

This chain is Large ribosomal subunit protein bL33, found in Rhizobium johnstonii (strain DSM 114642 / LMG 32736 / 3841) (Rhizobium leguminosarum bv. viciae).